We begin with the raw amino-acid sequence, 272 residues long: Ribosomal RNA large subunit methyltransferase E (272 aa).

5 residues coordinate S-adenosyl-L-methionine: G50, W52, D68, D84, and D109. K149 functions as the Proton acceptor in the catalytic mechanism. The TRAM domain occupies 196–254 (PLRRGDKFVVDIEKLGSGGDGAVLIEGFVVFVKEVEVGEKVRIKIADVKPNFAFADVEE).

It belongs to the class I-like SAM-binding methyltransferase superfamily. RNA methyltransferase RlmE family.

It localises to the cytoplasm. The catalysed reaction is uridine(2552) in 23S rRNA + S-adenosyl-L-methionine = 2'-O-methyluridine(2552) in 23S rRNA + S-adenosyl-L-homocysteine + H(+). Its function is as follows. Specifically methylates the uridine in position 2552 of 23S rRNA at the 2'-O position of the ribose in the fully assembled 50S ribosomal subunit. The chain is Ribosomal RNA large subunit methyltransferase E from Methanosarcina acetivorans (strain ATCC 35395 / DSM 2834 / JCM 12185 / C2A).